Here is a 501-residue protein sequence, read N- to C-terminus: Putative matrix metalloproteinase (501 aa).

The first 26 residues, 1-26 (MMPQYERKQIIIHISCVIICVVVTLT), serve as a signal peptide directing secretion. N-linked (GlcNAc...) asparagine; by host glycans are attached at residues N48, N58, N61, N94, N116, and N163. H179 serves as a coordination point for Zn(2+). E180 is an active-site residue. Zn(2+) is bound by residues H183 and H189. 4 N-linked (GlcNAc...) asparagine; by host glycosylation sites follow: N192, N267, N280, and N291. A Hemopexin repeat occupies 311–356 (TGHIDTISVIRGELYIFVDEYHWRFRSNGLLYSGYPLKTTHSWSVP). Residues N379 and N493 are each glycosylated (N-linked (GlcNAc...) asparagine; by host).

It belongs to the peptidase M10A family. Zn(2+) is required as a cofactor.

The protein is Putative matrix metalloproteinase of Trichoplusia ni ascovirus 2c (TnAV-2c).